Consider the following 499-residue polypeptide: Dual specificity protein kinase CLK2 (499 aa).

Residues 1 to 67 (MPHPRRYHSS…SYDDRSSDRR (67 aa)) form a disordered region. The segment covering 8-21 (HSSERGSRGSYREH) has biased composition (basic and acidic residues). A compositionally biased stretch (basic residues) spans 22–33 (YRSRKHKRRRSR). Residue Ser-34 is modified to Phosphoserine; by PKB/AKT1. Basic and acidic residues predominate over residues 47–67 (REDSYHVRSRSSYDDRSSDRR). Ser-98 is subject to Phosphoserine. Tyr-99 is subject to Phosphotyrosine; by autocatalysis. The tract at residues 101 to 143 (YQRENSSYRSQRSSRRKHRRRRRRSRTFSRSSSQHSSRRAKSV) is disordered. Residues 112–127 (RSSRRKHRRRRRRSRT) are compositionally biased toward basic residues. Position 127 is a phosphothreonine; by PKB/AKT1 (Thr-127). Ser-142 is modified (phosphoserine; by autocatalysis). Tyr-153 carries the post-translational modification Phosphotyrosine. The Protein kinase domain maps to 163 to 479 (YEIVSTLGEG…LGEALQHPFF (317 aa)). ATP contacts are provided by residues 169-177 (LGEGTFGRV) and Lys-193. The active-site Proton acceptor is Asp-290. Thr-344 carries the phosphothreonine; by PKB/AKT2 modification.

Belongs to the protein kinase superfamily. CMGC Ser/Thr protein kinase family. Lammer subfamily. Interacts with RBMX. Interacts with AKT1 and UBL5. Autophosphorylates on all three types of residues. Phosphorylation on Ser-34 and Thr-127 by AKT1 is induced by ionizing radiation or insulin. Phosphorylation plays a critical role in cell proliferation following low dose radiation and prevents cell death following high dose radiation. Phosphorylation at Thr-344 by PKB/AKT2 induces its kinase activity which is required for its stability. The phosphorylation status at Ser-142 influences its subnuclear localization; inhibition of phosphorylation at Ser-142 results in accumulation in the nuclear speckle. Endothelial cells. Expressed in androgen-dependent prostate cancer cells.

Its subcellular location is the nucleus. It is found in the nucleus speckle. It catalyses the reaction L-seryl-[protein] + ATP = O-phospho-L-seryl-[protein] + ADP + H(+). The enzyme catalyses L-threonyl-[protein] + ATP = O-phospho-L-threonyl-[protein] + ADP + H(+). The catalysed reaction is L-tyrosyl-[protein] + ATP = O-phospho-L-tyrosyl-[protein] + ADP + H(+). With respect to regulation, 5,6-dichloro-1-b-D-ribofuranosylbenzimidazole (DRB) inhibits autophosphorylation. TG003 inhibits its kinase activity and affects the regulation of alternative splicing mediated by phosphorylation of SR proteins. Functionally, dual specificity kinase acting on both serine/threonine and tyrosine-containing substrates. Phosphorylates serine- and arginine-rich (SR) proteins of the spliceosomal complex. May be a constituent of a network of regulatory mechanisms that enable SR proteins to control RNA splicing and can cause redistribution of SR proteins from speckles to a diffuse nucleoplasmic distribution. Acts as a suppressor of hepatic gluconeogenesis and glucose output by repressing PPARGC1A transcriptional activity on gluconeogenic genes via its phosphorylation. Phosphorylates PPP2R5B thereby stimulating the assembly of PP2A phosphatase with the PPP2R5B-AKT1 complex leading to dephosphorylation of AKT1. Phosphorylates: PTPN1, SRSF1 and SRSF3. Regulates the alternative splicing of tissue factor (F3) pre-mRNA in endothelial cells. Phosphorylates PAGE4 at several serine and threonine residues and this phosphorylation attenuates the ability of PAGE4 to potentiate the transcriptional activator activity of JUN. The chain is Dual specificity protein kinase CLK2 (CLK2) from Homo sapiens (Human).